A 569-amino-acid chain; its full sequence is Proline--tRNA ligase (569 aa).

The protein belongs to the class-II aminoacyl-tRNA synthetase family. ProS type 1 subfamily. As to quaternary structure, homodimer.

The protein resides in the cytoplasm. The catalysed reaction is tRNA(Pro) + L-proline + ATP = L-prolyl-tRNA(Pro) + AMP + diphosphate. Functionally, catalyzes the attachment of proline to tRNA(Pro) in a two-step reaction: proline is first activated by ATP to form Pro-AMP and then transferred to the acceptor end of tRNA(Pro). As ProRS can inadvertently accommodate and process non-cognate amino acids such as alanine and cysteine, to avoid such errors it has two additional distinct editing activities against alanine. One activity is designated as 'pretransfer' editing and involves the tRNA(Pro)-independent hydrolysis of activated Ala-AMP. The other activity is designated 'posttransfer' editing and involves deacylation of mischarged Ala-tRNA(Pro). The misacylated Cys-tRNA(Pro) is not edited by ProRS. This Campylobacter hominis (strain ATCC BAA-381 / DSM 21671 / CCUG 45161 / LMG 19568 / NCTC 13146 / CH001A) protein is Proline--tRNA ligase.